The primary structure comprises 443 residues: MSTTDSIVSSQAKQSSWRKSDTTWTLGLFGTAIGAGVLFFPIRAGFGGLIPILLMLVLAYPIAFYCHRALARLCLSGSNPSGNITETVEEHFGKTGGVVITFLYFFAICPLLWIYGVTITNTFMTFWENQLQMPALNRGFVALFLLLLMAFVIWFGKDLMVKVMSYLVWPFIASLVLISLSLIPYWNSAVIDQVDLSNIALTGHDGILVTVWLGISIMVFSFNFSPIVSSFVVSKREEYEKEFGREFTERKCSQIISRASMLMVAVVMFFAFSCLFTLSPQNMADAKAQNIPVLSYLANHFASLSGTKSTFATVLEYGASIIALVAIFKSFFGHYLGTLEGLNGLVLKFGYKGDKTKVSMGKLNTISMIFIMGSTWVVAYANPNILDLIEAMGAPIIASLLCLLPMYAIRKAPSLAKYRGRLDNVFVTLIGLLTILNIVYKLF.

The next 11 helical transmembrane spans lie at 22–42 (TTWTLGLFGTAIGAGVLFFPI), 44–64 (AGFGGLIPILLMLVLAYPIAF), 97–117 (GVVITFLYFFAICPLLWIYGV), 140–160 (FVALFLLLLMAFVIWFGKDLM), 163–183 (VMSYLVWPFIASLVLISLSLI), 207–227 (ILVTVWLGISIMVFSFNFSPI), 259–279 (ASMLMVAVVMFFAFSCLFTLS), 319–339 (ASIIALVAIFKSFFGHYLGTL), 366–386 (ISMIFIMGSTWVVAYANPNIL), 389–409 (IEAMGAPIIASLLCLLPMYAI), and 423–443 (DNVFVTLIGLLTILNIVYKLF).

This sequence belongs to the amino acid/polyamine transporter 2 family. SdaC/TdcC subfamily.

Its subcellular location is the cell inner membrane. It carries out the reaction L-threonine(in) + H(+)(in) = L-threonine(out) + H(+)(out). The enzyme catalyses L-serine(in) + H(+)(in) = L-serine(out) + H(+)(out). Involved in the import of threonine and serine into the cell, with the concomitant import of a proton (symport system). The sequence is that of Threonine/serine transporter TdcC from Salmonella paratyphi A (strain ATCC 9150 / SARB42).